The chain runs to 145 residues: Androgenic gland hormone (145 aa).

The signal sequence occupies residues 1–21 (MKGLLFIVSLLCLTLHQRVWA). Cystine bridges form between Cys-33–Cys-122, Cys-42–Cys-59, Cys-44–Cys-140, and Cys-123–Cys-131. The propeptide at 68–112 (SADDEDYLFEEDEDDEFFHPRALSPPAAKSGDERLEDEVSFHSRS) is c peptide. Residue Asn-132 is glycosylated (N-linked (GlcNAc...) asparagine).

Androgenic gland.

The protein resides in the secreted. Functionally, controls sex differentiation and the formation of male appendages, spermatogenesis, pigmentation, and male specific behavior. The protein is Androgenic gland hormone (AGH) of Porcellio scaber (Common rough woodlouse).